An 86-amino-acid chain; its full sequence is Apolipoprotein C-I (86 aa).

An N-terminal signal peptide occupies residues 1–26; it reads MRLFLSLPVLVVALLMILEGPGPAQG.

Belongs to the apolipoprotein C1 family.

The protein resides in the secreted. In terms of biological role, inhibitor of lipoprotein binding to the low density lipoprotein (LDL) receptor, LDL receptor-related protein, and very low density lipoprotein (VLDL) receptor. Associates with high density lipoproteins (HDL) and the triacylglycerol-rich lipoproteins in the plasma and makes up about 10% of the protein of the VLDL and 2% of that of HDL. Appears to interfere directly with fatty acid uptake and is also the major plasma inhibitor of cholesteryl ester transfer protein (CETP). Binds free fatty acids and reduces their intracellular esterification. Modulates the interaction of APOE with beta-migrating VLDL and inhibits binding of beta-VLDL to the LDL receptor-related protein. In Aotus nancymaae (Ma's night monkey), this protein is Apolipoprotein C-I (APOC1).